Consider the following 291-residue polypeptide: uncharacterized protein (291 aa).

Disordered regions lie at residues 29-50 (SEKP…LRDS) and 168-291 (RKVK…AELK). The residue at position 50 (S50) is a Phosphoserine. Polar residues-rich tracts occupy residues 176 to 186 (NSKNPSKTGTP) and 205 to 217 (QKNS…SKLI). Residues 221 to 237 (YKDEWLQQQKAEADRRT) are compositionally biased toward basic and acidic residues. The span at 280–291 (SSPSESTPAELK) shows a compositional bias: polar residues.

This is an uncharacterized protein from Mus musculus (Mouse).